A 239-amino-acid chain; its full sequence is Fatty acid metabolism regulator protein (239 aa).

In terms of domain architecture, HTH gntR-type spans 6–74; it reads QSPAGFAEEY…HGKPTKVNNF (69 aa). The H-T-H motif DNA-binding region spans 34-53; the sequence is ERELSELIGVTRTTLREVLQ.

Homodimer.

It is found in the cytoplasm. Multifunctional regulator of fatty acid metabolism. This is Fatty acid metabolism regulator protein from Yersinia pseudotuberculosis serotype O:1b (strain IP 31758).